Reading from the N-terminus, the 141-residue chain is Nucleoside diphosphate kinase (141 aa).

ATP-binding residues include lysine 11, phenylalanine 59, arginine 87, threonine 93, arginine 104, and asparagine 114. Histidine 117 serves as the catalytic Pros-phosphohistidine intermediate.

The protein belongs to the NDK family. Homotetramer. Mg(2+) serves as cofactor.

It localises to the cytoplasm. It carries out the reaction a 2'-deoxyribonucleoside 5'-diphosphate + ATP = a 2'-deoxyribonucleoside 5'-triphosphate + ADP. It catalyses the reaction a ribonucleoside 5'-diphosphate + ATP = a ribonucleoside 5'-triphosphate + ADP. Its function is as follows. Major role in the synthesis of nucleoside triphosphates other than ATP. The ATP gamma phosphate is transferred to the NDP beta phosphate via a ping-pong mechanism, using a phosphorylated active-site intermediate. The sequence is that of Nucleoside diphosphate kinase from Xanthomonas axonopodis pv. citri (strain 306).